Consider the following 161-residue polypeptide: ATP synthase subunit b' (161 aa).

The chain crosses the membrane as a helical span at residues Val-30–Tyr-47.

The protein belongs to the ATPase B chain family. In terms of assembly, F-type ATPases have 2 components, F(1) - the catalytic core - and F(0) - the membrane proton channel. F(1) has five subunits: alpha(3), beta(3), gamma(1), delta(1), epsilon(1). F(0) has four main subunits: a(1), b(1), b'(1) and c(10-14). The alpha and beta chains form an alternating ring which encloses part of the gamma chain. F(1) is attached to F(0) by a central stalk formed by the gamma and epsilon chains, while a peripheral stalk is formed by the delta, b and b' chains.

It localises to the cellular thylakoid membrane. Functionally, f(1)F(0) ATP synthase produces ATP from ADP in the presence of a proton or sodium gradient. F-type ATPases consist of two structural domains, F(1) containing the extramembraneous catalytic core and F(0) containing the membrane proton channel, linked together by a central stalk and a peripheral stalk. During catalysis, ATP synthesis in the catalytic domain of F(1) is coupled via a rotary mechanism of the central stalk subunits to proton translocation. Component of the F(0) channel, it forms part of the peripheral stalk, linking F(1) to F(0). The b'-subunit is a diverged and duplicated form of b found in plants and photosynthetic bacteria. The chain is ATP synthase subunit b' from Picosynechococcus sp. (strain ATCC 27264 / PCC 7002 / PR-6) (Agmenellum quadruplicatum).